The following is a 392-amino-acid chain: Phosphoglycerate kinase (392 aa).

Substrate-binding positions include 21–23, Arg36, 59–62, Arg113, and Arg146; these read DLN and HLGR. Residues Lys197, Glu319, and 345 to 348 each bind ATP; that span reads GGDT.

Belongs to the phosphoglycerate kinase family. As to quaternary structure, monomer.

It localises to the cytoplasm. It catalyses the reaction (2R)-3-phosphoglycerate + ATP = (2R)-3-phospho-glyceroyl phosphate + ADP. Its pathway is carbohydrate degradation; glycolysis; pyruvate from D-glyceraldehyde 3-phosphate: step 2/5. The chain is Phosphoglycerate kinase from Alkalilimnicola ehrlichii (strain ATCC BAA-1101 / DSM 17681 / MLHE-1).